The chain runs to 105 residues: uncharacterized protein (105 aa).

A helical transmembrane segment spans residues 64-84 (ILLISIFFLLLFALPQHTMGI).

The protein localises to the membrane. This is an uncharacterized protein from Saccharomyces cerevisiae (strain ATCC 204508 / S288c) (Baker's yeast).